The following is a 235-amino-acid chain: Ribitol-5-phosphate cytidylyltransferase (235 aa).

Residues 7–10, 82–88, and Ser-113 each bind CTP; these read LAGG and GADRNTS.

The protein belongs to the IspD/TarI cytidylyltransferase family. TarI subfamily.

The enzyme catalyses D-ribitol 5-phosphate + CTP + H(+) = CDP-L-ribitol + diphosphate. It functions in the pathway cell wall biogenesis; poly(ribitol phosphate) teichoic acid biosynthesis. Its function is as follows. Catalyzes the transfer of the cytidylyl group of CTP to D-ribitol 5-phosphate. This is Ribitol-5-phosphate cytidylyltransferase from Streptococcus pneumoniae (strain ATCC 700669 / Spain 23F-1).